Reading from the N-terminus, the 395-residue chain is Protein PELOTA 2 (395 aa).

Belongs to the eukaryotic release factor 1 family. Pelota subfamily. Requires a divalent metal cation as cofactor.

It localises to the cytoplasm. The protein localises to the nucleus. Its function is as follows. Component of the Pelota-HBS1L complex, a complex that recognizes stalled ribosomes and triggers the No-Go Decay (NGD) pathway. In the Pelota-HBS1L complex, pelo recognizes ribosomes stalled at the 3' end of an mRNA and engages stalled ribosomes by destabilizing mRNA in the mRNA channel. Following ribosome-binding, the Pelota-HBS1L complex promotes the disassembly of stalled ribosomes, followed by degradation of damaged mRNAs as part of the NGD pathway. This chain is Protein PELOTA 2 (PEL2), found in Arabidopsis thaliana (Mouse-ear cress).